The sequence spans 189 residues: Bilin-binding protein (189 aa).

An N-terminal signal peptide occupies residues 1 to 15 (MQYLIVLALVAAASA). Cystine bridges form between Cys23–Cys130 and Cys57–Cys185.

This sequence belongs to the calycin superfamily. Lipocalin family. In terms of assembly, homotetramer. Hemolymph.

It is found in the secreted. This protein binds the blue pigments bilins. This chain is Bilin-binding protein, found in Pieris brassicae (White butterfly).